A 489-amino-acid chain; its full sequence is NADH-quinone oxidoreductase subunit N (489 aa).

The next 14 membrane-spanning stretches (helical) occupy residues 8–28, 35–55, 75–95, 105–125, 127–147, 159–179, 203–223, 235–255, 271–291, 303–323, 329–349, 374–394, 407–427, and 456–476; these read LIAM…MLSI, FTIA…LYYV, FFTA…YPWL, FYML…AHHL, SMFI…GYAF, YMLL…LLYA, VLAG…LFPF, PAPT…AVVM, MILG…ALTQ, VSHL…PILA, IYLA…AVAS, AVVM…LGFI, SLWW…FYYL, and LITL…QPLI.

Belongs to the complex I subunit 2 family. In terms of assembly, NDH-1 is composed of 13 different subunits. Subunits NuoA, H, J, K, L, M, N constitute the membrane sector of the complex.

Its subcellular location is the cell inner membrane. The catalysed reaction is a quinone + NADH + 5 H(+)(in) = a quinol + NAD(+) + 4 H(+)(out). Its function is as follows. NDH-1 shuttles electrons from NADH, via FMN and iron-sulfur (Fe-S) centers, to quinones in the respiratory chain. The immediate electron acceptor for the enzyme in this species is believed to be ubiquinone. Couples the redox reaction to proton translocation (for every two electrons transferred, four hydrogen ions are translocated across the cytoplasmic membrane), and thus conserves the redox energy in a proton gradient. This Proteus mirabilis (strain HI4320) protein is NADH-quinone oxidoreductase subunit N.